A 170-amino-acid chain; its full sequence is Heat shock protein beta-7 (170 aa).

Residues Met-1–Pro-39 form a disordered region. The tract at residues Met-1–Gly-71 is required for localization to SC35 splicing speckles. Low complexity predominate over residues His-16–Ser-31. The sHSP domain occupies Pro-62–Ile-170.

It belongs to the small heat shock protein (HSP20) family. In terms of assembly, interacts with C-terminal domain of actin-binding protein 280. In terms of tissue distribution, isoform 1 is highly expressed in adult and fetal heart, skeletal muscle, and at a much lower levels in adipose tissue and in aorta. Undetectable in other tissues. Isoform 2 and isoform 3 are poorly detected in heart.

The protein resides in the cytoplasm. It is found in the nucleus. The protein localises to the cajal body. In Homo sapiens (Human), this protein is Heat shock protein beta-7 (HSPB7).